Consider the following 669-residue polypeptide: Dymeclin (669 aa).

Residue glycine 2 is the site of N-myristoyl glycine attachment.

Belongs to the dymeclin family. Interacts with GOLM1 and PPIB. In terms of processing, myristoylated in vitro; myristoylation is not essential for protein targeting to Golgi compartment. Expressed in most embryo-fetal and adult tissues. Abundant in primary chondrocytes, osteoblasts, cerebellum, kidney, lung, stomach, heart, pancreas and fetal brain. Very low or no expression in the spleen, thymus, esophagus, bladder and thyroid gland.

The protein localises to the cytoplasm. It localises to the golgi apparatus. It is found in the membrane. Its function is as follows. Necessary for correct organization of Golgi apparatus. Involved in bone development. This is Dymeclin (DYM) from Homo sapiens (Human).